Here is a 406-residue protein sequence, read N- to C-terminus: Phosphopentomutase (406 aa).

Positions 10, 305, 310, 346, 347, and 358 each coordinate Mn(2+).

Belongs to the phosphopentomutase family. Requires Mn(2+) as cofactor.

It localises to the cytoplasm. It carries out the reaction 2-deoxy-alpha-D-ribose 1-phosphate = 2-deoxy-D-ribose 5-phosphate. The enzyme catalyses alpha-D-ribose 1-phosphate = D-ribose 5-phosphate. The protein operates within carbohydrate degradation; 2-deoxy-D-ribose 1-phosphate degradation; D-glyceraldehyde 3-phosphate and acetaldehyde from 2-deoxy-alpha-D-ribose 1-phosphate: step 1/2. Its function is as follows. Isomerase that catalyzes the conversion of deoxy-ribose 1-phosphate (dRib-1-P) and ribose 1-phosphate (Rib-1-P) to deoxy-ribose 5-phosphate (dRib-5-P) and ribose 5-phosphate (Rib-5-P), respectively. The protein is Phosphopentomutase of Photobacterium profundum (strain SS9).